Consider the following 332-residue polypeptide: MTLINYKAADQKEVQLRYDWSFSEVESLLQKPLMDLLWDAQRVHRLTNPGYKVQLASLLSVKTGGCEEDCAYCSQSIHNSSDITSYSDFEVEEVLKRAKTAKDAGADRFCMGWAWREIRDGQPFESMLKMVRGVRDLGMEACVTAGMLTDNQALRLAEAGLTAYNHNLDTSPENYDQIITTRTYQERIETLERVRSAGITLCTGGIIGLGESLKDRASLLKVLANMSPHPESVPINALVAVEGTPLQDLPSIDPIEMVRMVATARILMPLSRVRLSAGREQLGDEAQILCFLAGADSIFYGDTLLTTSNPAIQADRELLSKAGVQVNWSLHE.

The Radical SAM core domain maps to 51-279 (YKVQLASLLS…LSRVRLSAGR (229 aa)). Residues Cys-66, Cys-70, and Cys-73 each contribute to the [4Fe-4S] cluster site. [2Fe-2S] cluster is bound by residues Cys-110, Cys-142, Cys-202, and Arg-274.

It belongs to the radical SAM superfamily. Biotin synthase family. Homodimer. [4Fe-4S] cluster is required as a cofactor. [2Fe-2S] cluster serves as cofactor.

It catalyses the reaction (4R,5S)-dethiobiotin + (sulfur carrier)-SH + 2 reduced [2Fe-2S]-[ferredoxin] + 2 S-adenosyl-L-methionine = (sulfur carrier)-H + biotin + 2 5'-deoxyadenosine + 2 L-methionine + 2 oxidized [2Fe-2S]-[ferredoxin]. It functions in the pathway cofactor biosynthesis; biotin biosynthesis; biotin from 7,8-diaminononanoate: step 2/2. Its function is as follows. Catalyzes the conversion of dethiobiotin (DTB) to biotin by the insertion of a sulfur atom into dethiobiotin via a radical-based mechanism. In Prochlorococcus marinus (strain MIT 9211), this protein is Biotin synthase.